The sequence spans 115 residues: T cell receptor beta variable 2 (115 aa).

An N-terminal signal peptide occupies residues 1–19; sequence MDTWLVCWAIFSLLKAGLT. The region spanning 21–115 is the Ig-like domain; sequence PEVTQTPSHQ…SAMYFCASSE (95 aa). C42 and C111 are disulfide-bonded. Residue N93 is glycosylated (N-linked (GlcNAc...) asparagine).

As to quaternary structure, alpha-beta TR is a heterodimer composed of an alpha and beta chain; disulfide-linked. The alpha-beta TR is associated with the transmembrane signaling CD3 coreceptor proteins to form the TR-CD3 (TcR or TCR). The assembly of alpha-beta TR heterodimers with CD3 occurs in the endoplasmic reticulum where a single alpha-beta TR heterodimer associates with one CD3D-CD3E heterodimer, one CD3G-CD3E heterodimer and one CD247 homodimer forming a stable octameric structure. CD3D-CD3E and CD3G-CD3E heterodimers preferentially associate with TR alpha and TR beta chains, respectively. The association of the CD247 homodimer is the last step of TcR assembly in the endoplasmic reticulum and is required for transport to the cell surface.

It localises to the cell membrane. Its function is as follows. V region of the variable domain of T cell receptor (TR) beta chain that participates in the antigen recognition. Alpha-beta T cell receptors are antigen specific receptors which are essential to the immune response and are present on the cell surface of T lymphocytes. Recognize peptide-major histocompatibility (MH) (pMH) complexes that are displayed by antigen presenting cells (APC), a prerequisite for efficient T cell adaptive immunity against pathogens. Binding of alpha-beta TR to pMH complex initiates TR-CD3 clustering on the cell surface and intracellular activation of LCK that phosphorylates the ITAM motifs of CD3G, CD3D, CD3E and CD247 enabling the recruitment of ZAP70. In turn ZAP70 phosphorylates LAT, which recruits numerous signaling molecules to form the LAT signalosome. The LAT signalosome propagates signal branching to three major signaling pathways, the calcium, the mitogen-activated protein kinase (MAPK) kinase and the nuclear factor NF-kappa-B (NF-kB) pathways, leading to the mobilization of transcription factors that are critical for gene expression and essential for T cell growth and differentiation. The T cell repertoire is generated in the thymus, by V-(D)-J rearrangement. This repertoire is then shaped by intrathymic selection events to generate a peripheral T cell pool of self-MH restricted, non-autoaggressive T cells. Post-thymic interaction of alpha-beta TR with the pMH complexes shapes TR structural and functional avidity. The sequence is that of T cell receptor beta variable 2 from Homo sapiens (Human).